The following is a 217-amino-acid chain: Adenylate kinase (217 aa).

11–16 contributes to the ATP binding site; it reads GAGKGT. Positions 31 to 60 are NMP; the sequence is STGDMFREAMANETPVGLEAKSYIDKGNLV. Residues Thr-32, Arg-37, 58–60, 86–89, and Gln-93 each bind AMP; these read NLV and GFPR. The LID stretch occupies residues 127–165; the sequence is ARYICKKCGATYNKISNPTKVEGTCDRCGGHEFFQREDD. Residue Arg-128 coordinates ATP. Zn(2+) contacts are provided by Cys-131 and Cys-134. 137 to 138 lines the ATP pocket; the sequence is TY. Zn(2+) contacts are provided by Cys-151 and Cys-154. The AMP site is built by Arg-162 and Arg-173. Gln-201 is an ATP binding site.

Belongs to the adenylate kinase family. Monomer.

The protein resides in the cytoplasm. The enzyme catalyses AMP + ATP = 2 ADP. The protein operates within purine metabolism; AMP biosynthesis via salvage pathway; AMP from ADP: step 1/1. Functionally, catalyzes the reversible transfer of the terminal phosphate group between ATP and AMP. Plays an important role in cellular energy homeostasis and in adenine nucleotide metabolism. The protein is Adenylate kinase of Lactobacillus johnsonii (strain CNCM I-12250 / La1 / NCC 533).